Here is a 427-residue protein sequence, read N- to C-terminus: MKTLTGTTEAILNELRAENSSNSSDQIASEVKAIIENVKNTGDQALFDYTAKFDGVELNELRIPNSDIQIATNKVDPAFLEALKEAKANIESFHNKQKQSAFLDSEKDGVIRGQIIRPLETVGVYVPGGTAAYPSSVLMNVLPAKIAGVKRIVMITPPSENGINPHVLAAANLAGVDEIYQVGGAHGIAALAYGTASIPKVDKIVGPGNVYVATAKREVFGLVDIDMIAGPSEIVVLADETAKPAFIAADLLSQAEHDTLARAILITTSEKIAQQTKIELNKQLENLPRKAIAKEATESHGKIIITKSTAEMFHIMNEIAPEHLEVQLENPMNYLYQIKNAGSIFLGNYASEPLGDYFAGPNHVLPTSGTAKFFSPLGVEDFTKRSAFISYTKEALAKEKDAIVLLASKEGLDAHAKAIQIRFEEEN.

Residues Ser232, Gln254, and His257 each contribute to the substrate site. Gln254 and His257 together coordinate Zn(2+). Catalysis depends on proton acceptor residues Glu322 and His323. Positions 323, 356, 410, and 415 each coordinate substrate. Asp356 is a binding site for Zn(2+). His415 serves as a coordination point for Zn(2+).

The protein belongs to the histidinol dehydrogenase family. Requires Zn(2+) as cofactor.

The enzyme catalyses L-histidinol + 2 NAD(+) + H2O = L-histidine + 2 NADH + 3 H(+). It participates in amino-acid biosynthesis; L-histidine biosynthesis; L-histidine from 5-phospho-alpha-D-ribose 1-diphosphate: step 9/9. Functionally, catalyzes the sequential NAD-dependent oxidations of L-histidinol to L-histidinaldehyde and then to L-histidine. The chain is Histidinol dehydrogenase from Listeria innocua serovar 6a (strain ATCC BAA-680 / CLIP 11262).